The sequence spans 363 residues: NADH-quinone oxidoreductase subunit H (363 aa).

9 consecutive transmembrane segments (helical) span residues 62-82 (GPMY…KLLF), 96-116 (FVIA…VVPF), 127-147 (VGLL…ILAG), 163-183 (AAQV…VMIA), 202-222 (FFDW…VSGV), 238-257 (EIVA…LFFL), 264-286 (ILVS…QGWV), 299-319 (KGGW…YIWF), and 339-359 (FIPL…YGVI).

This sequence belongs to the complex I subunit 1 family. As to quaternary structure, NDH-1 is composed of 14 different subunits. Subunits NuoA, H, J, K, L, M, N constitute the membrane sector of the complex.

The protein resides in the cell inner membrane. It carries out the reaction a quinone + NADH + 5 H(+)(in) = a quinol + NAD(+) + 4 H(+)(out). In terms of biological role, NDH-1 shuttles electrons from NADH, via FMN and iron-sulfur (Fe-S) centers, to quinones in the respiratory chain. The immediate electron acceptor for the enzyme in this species is believed to be ubiquinone. Couples the redox reaction to proton translocation (for every two electrons transferred, four hydrogen ions are translocated across the cytoplasmic membrane), and thus conserves the redox energy in a proton gradient. This subunit may bind ubiquinone. This chain is NADH-quinone oxidoreductase subunit H, found in Xanthomonas axonopodis pv. citri (strain 306).